The sequence spans 183 residues: MGNGINKVLPDLYLGNFKDARDREQLARNNITHILSIHDTAAPILQEMTYLCIAAADSPTQNLIQHFRQSIAFIHQSRLKGEGCLVHCLAGVSRSVTLVVAYIMTVTTLGWQEALAAVKIARPCASPNTGFQNQLQEFQTGELQQFREWLKEEYKENPFNDEEDIRNLLTKASTEEDAELQNN.

The 141-residue stretch at 4–144 folds into the Tyrosine-protein phosphatase domain; sequence GINKVLPDLY…LQEFQTGELQ (141 aa). Cysteine 88 (phosphocysteine intermediate) is an active-site residue.

The protein belongs to the protein-tyrosine phosphatase family. Non-receptor class dual specificity subfamily.

It localises to the cytoplasm. It is found in the nucleus. It catalyses the reaction O-phospho-L-tyrosyl-[protein] + H2O = L-tyrosyl-[protein] + phosphate. The enzyme catalyses O-phospho-L-seryl-[protein] + H2O = L-seryl-[protein] + phosphate. The catalysed reaction is O-phospho-L-threonyl-[protein] + H2O = L-threonyl-[protein] + phosphate. In terms of biological role, activates the Jnk signaling pathway. Dephosphorylates and deactivates p38 and stress-activated protein kinase/c-Jun N-terminal kinase (SAPK/JNK). The polypeptide is Dual specificity protein phosphatase 22-B (dusp22b) (Danio rerio (Zebrafish)).